A 395-amino-acid polypeptide reads, in one-letter code: Succinyl-diaminopimelate desuccinylase (395 aa).

His-81 contacts Zn(2+). Residue Asp-83 is part of the active site. Asp-114 is a Zn(2+) binding site. The Proton acceptor role is filled by Glu-146. Positions 147, 175, and 364 each coordinate Zn(2+).

Belongs to the peptidase M20A family. DapE subfamily. In terms of assembly, homodimer. The cofactor is Zn(2+). It depends on Co(2+) as a cofactor.

The enzyme catalyses N-succinyl-(2S,6S)-2,6-diaminopimelate + H2O = (2S,6S)-2,6-diaminopimelate + succinate. The protein operates within amino-acid biosynthesis; L-lysine biosynthesis via DAP pathway; LL-2,6-diaminopimelate from (S)-tetrahydrodipicolinate (succinylase route): step 3/3. Catalyzes the hydrolysis of N-succinyl-L,L-diaminopimelic acid (SDAP), forming succinate and LL-2,6-diaminopimelate (DAP), an intermediate involved in the bacterial biosynthesis of lysine and meso-diaminopimelic acid, an essential component of bacterial cell walls. This is Succinyl-diaminopimelate desuccinylase from Parvibaculum lavamentivorans (strain DS-1 / DSM 13023 / NCIMB 13966).